Consider the following 355-residue polypeptide: Elongation factor Ts (355 aa).

Residues Thr82 to Val85 are involved in Mg(2+) ion dislocation from EF-Tu.

The protein belongs to the EF-Ts family.

The protein localises to the cytoplasm. Functionally, associates with the EF-Tu.GDP complex and induces the exchange of GDP to GTP. It remains bound to the aminoacyl-tRNA.EF-Tu.GTP complex up to the GTP hydrolysis stage on the ribosome. In Helicobacter pylori (strain P12), this protein is Elongation factor Ts.